The primary structure comprises 317 residues: Zinc finger protein 771 (317 aa).

Acidic residues predominate over residues 1–17 (MPGEQQAEEEEEEEMQE). Residues 1–63 (MPGEQQAEEE…APSADPARPH (63 aa)) form a disordered region. Lys-33 is covalently cross-linked (Glycyl lysine isopeptide (Lys-Gly) (interchain with G-Cter in SUMO2)). A compositionally biased stretch (basic and acidic residues) spans 33–49 (KYEVVKLKIPMDNKEVP). C2H2-type zinc fingers lie at residues 63–85 (HACPDCGRAFARRSTLAKHARTH), 91–113 (FGCTECGRRFSQKSALTKHGRTH), 119–141 (YECPECDKRFSAASNLRQHRRRH), 147–169 (YACAHCGRRFAQSSNYAQHLRVH), 175–197 (YACPDCGRAFGGSSCLARHRRTH), 203–225 (YACADCGTRFAQSSALAKHRRVH), 231–253 (HRCAVCGRRFGHRSNLAEHARTH), and 259–281 (YPCAECGRRFRLSSHFIRHRRAH).

It belongs to the krueppel C2H2-type zinc-finger protein family.

The protein localises to the nucleus. In terms of biological role, may be involved in transcriptional regulation. The protein is Zinc finger protein 771 (ZNF771) of Homo sapiens (Human).